Consider the following 508-residue polypeptide: Lysine--tRNA ligase (508 aa).

Positions 418 and 425 each coordinate Mg(2+).

The protein belongs to the class-II aminoacyl-tRNA synthetase family. Homodimer. Requires Mg(2+) as cofactor.

The protein resides in the cytoplasm. It carries out the reaction tRNA(Lys) + L-lysine + ATP = L-lysyl-tRNA(Lys) + AMP + diphosphate. This is Lysine--tRNA ligase from Burkholderia pseudomallei (strain K96243).